We begin with the raw amino-acid sequence, 134 residues long: Small ribosomal subunit protein uS8c (134 aa).

This sequence belongs to the universal ribosomal protein uS8 family. Part of the 30S ribosomal subunit.

Its subcellular location is the plastid. One of the primary rRNA binding proteins, it binds directly to 16S rRNA central domain where it helps coordinate assembly of the platform of the 30S subunit. In Cuscuta reflexa (Southern Asian dodder), this protein is Small ribosomal subunit protein uS8c (rps8).